A 37-amino-acid chain; its full sequence is Omega-agatoxin-Aa3d (37 aa).

This sequence belongs to the neurotoxin 04 (omega-agtx) family. 03 (type II/III omega-agtx) subfamily. In terms of processing, disulfide bonds are present. In terms of tissue distribution, expressed by the venom gland.

It is found in the secreted. Omega-agatoxins are antagonists of voltage-gated calcium channels. This toxin blocks calcium channels in insect central neurons but not at peripheral neuromuscular junctions. In vertebrates, it is broadly active against all high-threshold Cav1/CACNA1 channels and Cav2.2/CACNA1B channels. This Agelenopsis aperta (North American funnel-web spider) protein is Omega-agatoxin-Aa3d.